The primary structure comprises 743 residues: Putative metallophosphoesterase At3g03305 (743 aa).

The N-terminal stretch at 1–40 (MESIGDDDELRSKTVSLPRRISFTILLLLLLISLSTRVSG) is a signal peptide. Residues aspartate 66, histidine 68, and aspartate 101 each contribute to the a divalent metal cation site. 5 consecutive transmembrane segments (helical) span residues 514–534 (ILWPALYSLFLVFLIPKCIII), 565–585 (MPVVWFGYMAYLFYLIFFPWF), 623–643 (VMVVVIPHVVFVVIPSVLVVC), 687–704 (LFRKSVLLASLALYWKHF), and 716–736 (MNVVHFPGYSLVVPLLLLYVI).

Belongs to the metallophosphoesterase superfamily. It depends on a divalent metal cation as a cofactor.

The protein localises to the membrane. The polypeptide is Putative metallophosphoesterase At3g03305 (Arabidopsis thaliana (Mouse-ear cress)).